The primary structure comprises 554 residues: ATP synthase subunit alpha (554 aa).

Position 173-180 (173-180) interacts with ATP; the sequence is GDRQTGKT. A disordered region spans residues 531–554; sequence SHLAAEKVRKHVPPSKPTTQRTAG.

Belongs to the ATPase alpha/beta chains family. As to quaternary structure, F-type ATPases have 2 components, CF(1) - the catalytic core - and CF(0) - the membrane proton channel. CF(1) has five subunits: alpha(3), beta(3), gamma(1), delta(1), epsilon(1). CF(0) has three main subunits: a(1), b(2) and c(9-12). The alpha and beta chains form an alternating ring which encloses part of the gamma chain. CF(1) is attached to CF(0) by a central stalk formed by the gamma and epsilon chains, while a peripheral stalk is formed by the delta and b chains.

The protein localises to the cell membrane. It carries out the reaction ATP + H2O + 4 H(+)(in) = ADP + phosphate + 5 H(+)(out). Produces ATP from ADP in the presence of a proton gradient across the membrane. The alpha chain is a regulatory subunit. The sequence is that of ATP synthase subunit alpha from Acidothermus cellulolyticus (strain ATCC 43068 / DSM 8971 / 11B).